A 348-amino-acid chain; its full sequence is Protein pelota homolog (348 aa).

Belongs to the eukaryotic release factor 1 family. Pelota subfamily. In terms of assembly, monomer. A divalent metal cation is required as a cofactor.

It localises to the cytoplasm. In terms of biological role, may function in recognizing stalled ribosomes, interact with stem-loop structures in stalled mRNA molecules, and effect endonucleolytic cleavage of the mRNA. May play a role in the release non-functional ribosomes and degradation of damaged mRNAs. Has endoribonuclease activity. The chain is Protein pelota homolog from Methanococcus maripaludis (strain C7 / ATCC BAA-1331).